Consider the following 66-residue polypeptide: Phylloseptin-Az2 (66 aa).

The first 22 residues, 1 to 22 (MAFLKKSLFLVLFLGLVSLSIC), serve as a signal peptide directing secretion. Positions 23–44 (EEEKRETEEKENEQEDDDKSEE) are excised as a propeptide. A disordered region spans residues 24–45 (EEKRETEEKENEQEDDDKSEEK). A compositionally biased stretch (acidic residues) spans 31–41 (EKENEQEDDDK). Phenylalanine 65 carries the phenylalanine amide modification.

As to expression, expressed by the skin glands.

The protein localises to the secreted. Functionally, has antibacterial activity against the Gram-negative bacteria E.coli ATCC 11775 (MIC=7.2 uM), and the Gram-positive bacteria S.aureus ATCC 12600 (MIC=3.6 uM) and M.luteus ATCC 49732 (MIC=1.8 uM). Does not inhibit the growth of the fungus C.albicans. This is Phylloseptin-Az2 from Pithecopus azureus (Orange-legged monkey tree frog).